A 371-amino-acid chain; its full sequence is DNA replication and repair protein RecF (371 aa).

Residue 30–37 participates in ATP binding; sequence GSNGQGKT.

The protein belongs to the RecF family.

The protein resides in the cytoplasm. Functionally, the RecF protein is involved in DNA metabolism; it is required for DNA replication and normal SOS inducibility. RecF binds preferentially to single-stranded, linear DNA. It also seems to bind ATP. The sequence is that of DNA replication and repair protein RecF from Acidothermus cellulolyticus (strain ATCC 43068 / DSM 8971 / 11B).